The primary structure comprises 529 residues: Peptide chain release factor 3 (529 aa).

Residues 11–279 (AKRRTFAIIS…GLVDWAPKPQ (269 aa)) form the tr-type G domain. Residues 20–27 (SHPDAGKT), 88–92 (DTPGH), and 142–145 (NKLD) contribute to the GTP site.

This sequence belongs to the TRAFAC class translation factor GTPase superfamily. Classic translation factor GTPase family. PrfC subfamily.

It localises to the cytoplasm. Functionally, increases the formation of ribosomal termination complexes and stimulates activities of RF-1 and RF-2. It binds guanine nucleotides and has strong preference for UGA stop codons. It may interact directly with the ribosome. The stimulation of RF-1 and RF-2 is significantly reduced by GTP and GDP, but not by GMP. This Idiomarina loihiensis (strain ATCC BAA-735 / DSM 15497 / L2-TR) protein is Peptide chain release factor 3.